A 179-amino-acid polypeptide reads, in one-letter code: Large ribosomal subunit protein uL6 (179 aa).

This sequence belongs to the universal ribosomal protein uL6 family. In terms of assembly, part of the 50S ribosomal subunit.

In terms of biological role, this protein binds to the 23S rRNA, and is important in its secondary structure. It is located near the subunit interface in the base of the L7/L12 stalk, and near the tRNA binding site of the peptidyltransferase center. The protein is Large ribosomal subunit protein uL6 of Synechococcus sp. (strain RCC307).